The chain runs to 449 residues: Putative methylthiotransferase MJ0865 (449 aa).

The 228-residue stretch at 163–390 (SIRGANVYIE…EGEYRKLGLS (228 aa)) folds into the Radical SAM core domain. [4Fe-4S] cluster is bound by residues Cys-177, Cys-181, and Cys-184.

The protein belongs to the methylthiotransferase family. [4Fe-4S] cluster is required as a cofactor.

The protein is Putative methylthiotransferase MJ0865 of Methanocaldococcus jannaschii (strain ATCC 43067 / DSM 2661 / JAL-1 / JCM 10045 / NBRC 100440) (Methanococcus jannaschii).